A 192-amino-acid polypeptide reads, in one-letter code: Probable apo-citrate lyase phosphoribosyl-dephospho-CoA transferase (192 aa).

This sequence belongs to the CitX family.

It carries out the reaction apo-[citrate lyase ACP] + 2'-(5''-triphospho-alpha-D-ribosyl)-3'-dephospho-CoA = holo-[citrate lyase ACP] + diphosphate. Its function is as follows. Transfers 2-(5''-triphosphoribosyl)-3'-dephosphocoenzyme-A on a serine residue to the apo-acyl carrier protein (gamma chain) of the citrate lyase to yield holo-acyl carrier protein. In Streptococcus pyogenes serotype M6 (strain ATCC BAA-946 / MGAS10394), this protein is Probable apo-citrate lyase phosphoribosyl-dephospho-CoA transferase.